The sequence spans 249 residues: MPFEIVFDGAKEFADLIDTASNLIDEAAFKIAEEGMSMRAMDPSRVVLLDLNLPASIFSKYDIDGEETVGVNMDHFKKVLKRGKGKDILVLRKGEENFLEITLEGTAKRTFRLPLIEVEELELDLPELPFTVRAVILGEVLKEAVKDASLVSDSIKFIAKENEFIMKAEGETQEVEIKLTLEDEGLLDLNVEEETKSAYGVSYLADMAKGIGKADEVVLRFGNEMPLQMDYPIRDEGRLTFLLAPRVEE.

This sequence belongs to the PCNA family. In terms of assembly, homotrimer. The subunits circularize to form a toroid; DNA passes through its center. Replication factor C (RFC) is required to load the toroid on the DNA.

In terms of biological role, sliding clamp subunit that acts as a moving platform for DNA processing. Responsible for tethering the catalytic subunit of DNA polymerase and other proteins to DNA during high-speed replication. This chain is DNA polymerase sliding clamp, found in Thermococcus sibiricus (strain DSM 12597 / MM 739).